The following is a 183-amino-acid chain: GMP synthase [glutamine-hydrolyzing] subunit A (183 aa).

In terms of domain architecture, Glutamine amidotransferase type-1 spans 3–183 (HILVVDNHGQ…VFENFVAICE (181 aa)). The active-site Nucleophile is the C74. Active-site residues include H162 and E164.

As to quaternary structure, heterodimer composed of a glutamine amidotransferase subunit (A) and a GMP-binding subunit (B).

The catalysed reaction is XMP + L-glutamine + ATP + H2O = GMP + L-glutamate + AMP + diphosphate + 2 H(+). It functions in the pathway purine metabolism; GMP biosynthesis; GMP from XMP (L-Gln route): step 1/1. In terms of biological role, catalyzes the synthesis of GMP from XMP. This is GMP synthase [glutamine-hydrolyzing] subunit A from Halobacterium salinarum (strain ATCC 700922 / JCM 11081 / NRC-1) (Halobacterium halobium).